Consider the following 298-residue polypeptide: Inosose dehydratase (298 aa).

It belongs to the IolE/MocC family. Requires glutathione as cofactor. The cofactor is Co(2+). It depends on Mn(2+) as a cofactor.

It catalyses the reaction scyllo-inosose = 3D-3,5/4-trihydroxycyclohexane-1,2-dione + H2O. The protein operates within polyol metabolism; myo-inositol degradation into acetyl-CoA; acetyl-CoA from myo-inositol: step 2/7. Its function is as follows. Catalyzes the dehydration of inosose (2-keto-myo-inositol, 2KMI or 2,4,6/3,5-pentahydroxycyclohexanone) to 3D-(3,5/4)-trihydroxycyclohexane-1,2-dione (D-2,3-diketo-4-deoxy-epi-inositol). The polypeptide is Inosose dehydratase (Clostridium botulinum (strain Alaska E43 / Type E3)).